Consider the following 359-residue polypeptide: Phospho-N-acetylmuramoyl-pentapeptide-transferase (359 aa).

Transmembrane regions (helical) follow at residues 3 to 23 (QILI…PALI), 55 to 75 (VAII…GLAF), 80 to 100 (ISAS…VGFL), 117 to 137 (TAKT…ALGF), 156 to 176 (IATV…VVSA), 187 to 207 (LDGL…LITF), 231 to 251 (LAIV…WNAA), 255 to 275 (IFMG…ISVT), 280 to 300 (ILAV…VLQI), and 334 to 354 (FWLL…GEWL).

The protein belongs to the glycosyltransferase 4 family. MraY subfamily. Mg(2+) serves as cofactor.

The protein localises to the cell membrane. It catalyses the reaction UDP-N-acetyl-alpha-D-muramoyl-L-alanyl-gamma-D-glutamyl-meso-2,6-diaminopimeloyl-D-alanyl-D-alanine + di-trans,octa-cis-undecaprenyl phosphate = di-trans,octa-cis-undecaprenyl diphospho-N-acetyl-alpha-D-muramoyl-L-alanyl-D-glutamyl-meso-2,6-diaminopimeloyl-D-alanyl-D-alanine + UMP. Its pathway is cell wall biogenesis; peptidoglycan biosynthesis. Functionally, catalyzes the initial step of the lipid cycle reactions in the biosynthesis of the cell wall peptidoglycan: transfers peptidoglycan precursor phospho-MurNAc-pentapeptide from UDP-MurNAc-pentapeptide onto the lipid carrier undecaprenyl phosphate, yielding undecaprenyl-pyrophosphoryl-MurNAc-pentapeptide, known as lipid I. This is Phospho-N-acetylmuramoyl-pentapeptide-transferase from Mycobacterium avium (strain 104).